Reading from the N-terminus, the 61-residue chain is Small ribosomal subunit protein uS14 (61 aa).

Positions 24, 27, 40, and 43 each coordinate Zn(2+).

This sequence belongs to the universal ribosomal protein uS14 family. Zinc-binding uS14 subfamily. As to quaternary structure, part of the 30S ribosomal subunit. Contacts proteins S3 and S10. Zn(2+) is required as a cofactor.

In terms of biological role, binds 16S rRNA, required for the assembly of 30S particles and may also be responsible for determining the conformation of the 16S rRNA at the A site. The polypeptide is Small ribosomal subunit protein uS14 (Borrelia hermsii (strain HS1 / DAH)).